The following is a 213-amino-acid chain: Putative transmembrane protein DDB_G0267860 (213 aa).

Residues 1 to 22 (MKTKILLLNFIIIFFLINVNLA) form the signal peptide. Residues 23 to 191 (IKKDSPFKEI…SSKFDSSTSS (169 aa)) lie on the Extracellular side of the membrane. Residues N92 and N114 are each glycosylated (N-linked (GlcNAc...) asparagine). The helical transmembrane segment at 192–212 (ISINTLAILSLLFLIFINKLI) threads the bilayer. N213 is a topological domain (cytoplasmic).

It is found in the membrane. The protein is Putative transmembrane protein DDB_G0267860 of Dictyostelium discoideum (Social amoeba).